The sequence spans 478 residues: Alpha-1,3-mannosyl-glycoprotein 4-beta-N-acetylglucosaminyltransferase C (478 aa).

Residues 1–25 (MLKFYQMKYIFQILDKMRCLRKRST) are Cytoplasmic-facing. A helical; Signal-anchor for type II membrane protein membrane pass occupies residues 26–43 (VSFLGVLVVFLLFMNLYI). Topologically, residues 44-478 (EDSYVLEGDK…IIRSISIWTS (435 aa)) are lumenal. Residues N84 and N215 are each glycosylated (N-linked (GlcNAc...) asparagine).

It belongs to the glycosyltransferase 54 family. It depends on a divalent metal cation as a cofactor.

Its subcellular location is the golgi apparatus membrane. It catalyses the reaction N(4)-{beta-D-GlcNAc-(1-&gt;2)-alpha-D-Man-(1-&gt;3)-[beta-D-GlcNAc-(1-&gt;2)-alpha-D-Man-(1-&gt;6)]-beta-D-Man-(1-&gt;4)-beta-D-GlcNAc-(1-&gt;4)-beta-D-GlcNAc}-L-asparaginyl-[protein] + UDP-N-acetyl-alpha-D-glucosamine = N(4)-{beta-D-GlcNAc-(1-&gt;2)-[beta-D-GlcNAc-(1-&gt;4)]-alpha-D-Man-(1-&gt;3)-[beta-D-GlcNAc-(1-&gt;2)-alpha-D-Man-(1-&gt;6)]-beta-D-Man-(1-&gt;4)-beta-D-GlcNAc-(1-&gt;4)-beta-D-GlcNAc}-L-asparaginyl-[protein] + UDP + H(+). It functions in the pathway protein modification; protein glycosylation. Glycosyltransferase that participates in the transfer of N-acetylglucosamine (GlcNAc) to the core mannose residues of N-linked glycans. Catalyzes the formation of the GlcNAcbeta1-4 branch on the GlcNAcbeta1-2Manalpha1-3 arm of the core structure of N-linked glycans. Essential for the production of tri- and tetra-antennary N-linked sugar chains. Does not catalyze the transfer of GlcNAc to the Manalpha1-6 arm to form GlcNAcBeta1-4Manalpha1-6 linkage ('GnT-VI' activity). The polypeptide is Alpha-1,3-mannosyl-glycoprotein 4-beta-N-acetylglucosaminyltransferase C (Mgat4c) (Mus musculus (Mouse)).